The following is a 631-amino-acid chain: Phosphomethylpyrimidine synthase (631 aa).

Residues Asn-239, Met-268, Tyr-297, His-333, 353 to 355, 394 to 397, and Glu-433 contribute to the substrate site; these read SRG and DGLR. His-437 contacts Zn(2+). Tyr-460 is a binding site for substrate. A Zn(2+)-binding site is contributed by His-501. 3 residues coordinate [4Fe-4S] cluster: Cys-581, Cys-584, and Cys-589.

The protein belongs to the ThiC family. In terms of assembly, homodimer. It depends on [4Fe-4S] cluster as a cofactor.

The enzyme catalyses 5-amino-1-(5-phospho-beta-D-ribosyl)imidazole + S-adenosyl-L-methionine = 4-amino-2-methyl-5-(phosphooxymethyl)pyrimidine + CO + 5'-deoxyadenosine + formate + L-methionine + 3 H(+). It participates in cofactor biosynthesis; thiamine diphosphate biosynthesis. Catalyzes the synthesis of the hydroxymethylpyrimidine phosphate (HMP-P) moiety of thiamine from aminoimidazole ribotide (AIR) in a radical S-adenosyl-L-methionine (SAM)-dependent reaction. This chain is Phosphomethylpyrimidine synthase, found in Klebsiella pneumoniae (strain 342).